The primary structure comprises 63 residues: Male-specific sperm protein Mst84Da (63 aa).

It belongs to the MST(3)CGP family. In terms of tissue distribution, testis.

This is Male-specific sperm protein Mst84Da (Mst84Da) from Drosophila melanogaster (Fruit fly).